A 153-amino-acid chain; its full sequence is Endoribonuclease RegB (153 aa).

Activity is stimulated 10- to 100-fold by host ribosomal protein S1, which also helps confer substrate choice. Its function is as follows. Essential to the early nucleolytic processing of a number of T4 messenger RNAs. Specifically cleaves after the GG dinucleotide GGAG within consensus 5'-GGAGRAYARAA-3' (R is a purine and Y is a pyrimidine) sequences found mainly in translation initiation sites. This chain is Endoribonuclease RegB (regB), found in Enterobacteria phage T4 (Bacteriophage T4).